The following is a 189-amino-acid chain: Fucolectin-5 (189 aa).

A signal peptide spans 1-31; it reads MKTCNLTDRMKVKMIMLLFQILAISTLQSDS. Positions 40 to 189 are F5/8 type C-like; that stretch reads QENVAVRGKA…VEVNALLPAN (150 aa). Asp-70, Asn-72, and Ser-81 together coordinate Ca(2+). 3 disulfides stabilise this stretch: Cys-82–Cys-178, Cys-114–Cys-115, and Cys-140–Cys-156. Residues His-84 and Arg-111 each coordinate alpha-L-fucose. Residues 111–113 carry the Cell attachment site motif; it reads RGD. Arg-118 serves as a coordination point for alpha-L-fucose. The Ca(2+) site is built by Cys-178 and Glu-179.

It belongs to the fucolectin family. As to quaternary structure, homotrimer. Gill mucous cells.

The protein resides in the secreted. In terms of biological role, acts as a defensive agent. Recognizes blood group fucosylated oligosaccharides including A, B, H and Lewis B-type antigens. Does not recognize Lewis A antigen and has low affinity for monovalent haptens. The sequence is that of Fucolectin-5 from Anguilla japonica (Japanese eel).